The following is a 201-amino-acid chain: Glutathione S-transferase GstA (201 aa).

Residues 1–81 (MKLFYKPGAC…YLADSVPDRQ (81 aa)) enclose the GST N-terminal domain. Residues Cys10, Lys35, Val52, 65–66 (EG), Asn99, and 103–106 (TELH) each bind glutathione. Residues 87-201 (NSISRYKTIE…QDALSAEGLK (115 aa)) enclose the GST C-terminal domain.

The protein belongs to the GST superfamily. Beta family. As to quaternary structure, homodimer.

It localises to the cytoplasm. The enzyme catalyses RX + glutathione = an S-substituted glutathione + a halide anion + H(+). Functionally, conjugation of reduced glutathione to a wide number of exogenous and endogenous hydrophobic electrophiles. This Escherichia coli O157:H7 protein is Glutathione S-transferase GstA (gstA).